The sequence spans 319 residues: Probable ABC transporter permease protein MG189 homolog (319 aa).

6 helical membrane-spanning segments follow: residues 41–61 (VVLC…LVVA), 98–118 (AIWI…FFTV), 134–154 (LFWF…LIGQ), 169–189 (PAII…GFMF), 229–249 (TVSI…LLLL), and 282–302 (NLKM…YFLF). The ABC transmembrane type-1 domain maps to 99–302 (IWINSLVTIL…LPMFIVYFLF (204 aa)).

Belongs to the binding-protein-dependent transport system permease family. MalFG subfamily.

The protein localises to the cell membrane. Probably part of a binding-protein-dependent transport system. Probably responsible for the translocation of the substrate across the membrane. In Mycoplasma pneumoniae (strain ATCC 29342 / M129 / Subtype 1) (Mycoplasmoides pneumoniae), this protein is Probable ABC transporter permease protein MG189 homolog.